Consider the following 98-residue polypeptide: UPF0235 protein azo3464 (98 aa).

It belongs to the UPF0235 family.

This is UPF0235 protein azo3464 from Azoarcus sp. (strain BH72).